The sequence spans 289 residues: Small ribosomal subunit protein uS2C (289 aa).

The protein belongs to the universal ribosomal protein uS2 family. As to quaternary structure, component of the small ribosomal subunit. Mature ribosomes consist of a small (40S) and a large (60S) subunit. The 40S subunit contains about 33 different proteins and 1 molecule of RNA (18S). The 60S subunit contains about 49 different proteins and 3 molecules of RNA (25S, 5.8S and 5S). Interacts with rps21.

It is found in the cytoplasm. Functionally, required for the assembly and/or stability of the 40S ribosomal subunit. Required for the processing of the 20S rRNA-precursor to mature 18S rRNA in a late step of the maturation of 40S ribosomal subunits. This Schizosaccharomyces japonicus (strain yFS275 / FY16936) (Fission yeast) protein is Small ribosomal subunit protein uS2C (rps0c).